Reading from the N-terminus, the 771-residue chain is Solute carrier family 7 member 14 (771 aa).

6 helical membrane passes run 58-78 (LISLGVGSCVGTGMYVVSGLV), 83-103 (AGPGVIVSFIIAAVASILSGV), 119-141 (AYTYSYVTVGEFVAFFIGWNLIL), 187-207 (YPDLLALLIAVIVTIIVALGV), 216-236 (VLNVLNLAVWVFIMIAGLFFI), and 251-271 (WSGVLQGAATCFYAFIGFDII). Asparagine 282 is a glycosylation site (N-linked (GlcNAc...) asparagine). 5 consecutive transmembrane segments (helical) span residues 291-311 (ASLVICLTAYVSVSVILTLMV), 336-356 (FVVAIGSVAGLTVSLLGSLFP), 360-380 (VIYAMAGDGLLFRFLAHVSSY), 384-404 (PVVACIVSGFLAALLALLVSL), and 407-427 (LIEMMSIGTLLAYTLVSVCVL). Serine 465, serine 468, and serine 488 each carry phosphoserine. Helical transmembrane passes span 565–585 (VTICVLLLFILMFIFCSFIIF), 596–616 (WAILLVVLMVLLISTLVFVIL), 628–648 (MAPCLPFVPAFAMLVNIYLML), and 655–675 (WIRFAVWCFVGLLIYFGYGIW). Asparagine 676 carries an N-linked (GlcNAc...) asparagine glycan. The tract at residues 736-771 (DAKANGRTSSKAKSKSKHKQNSEALIANDELDYSPE) is disordered. The span at 745–754 (SKAKSKSKHK) shows a compositional bias: basic residues. Serine 757 and serine 769 each carry phosphoserine.

Belongs to the amino acid-polyamine-organocation (APC) superfamily. Cationic amino acid transporter (CAT) (TC 2.A.3.3) family. In terms of tissue distribution, expressed in skin fibroblasts.

Its subcellular location is the lysosome membrane. The catalysed reaction is 4-aminobutanoate(in) = 4-aminobutanoate(out). In terms of biological role, imports 4-aminobutanoate (GABA) into lysosomes. May act as a GABA sensor that regulates mTORC2-dependent INS signaling and gluconeogenesis. The transport mechanism and substrate selectivity remain to be elucidated. The protein is Solute carrier family 7 member 14 of Homo sapiens (Human).